We begin with the raw amino-acid sequence, 256 residues long: Adenylate kinase (256 aa).

49-54 provides a ligand contact to ATP; that stretch reads GAGKGT. The segment at 69-98 is NMP; sequence ATGDMLRDQVEKKTPLGIAAKKIMDAGGLV. AMP contacts are provided by residues Thr70, Arg75, 96–98, 125–128, and Gln132; these read GLV and GFPR. Residues 166–203 form an LID region; sequence GRLIHPASGRSYHKIFNPPKKAGIDDLTGEPLIQRSDD. ATP-binding positions include Arg167 and 176 to 177; that span reads SY. Residues Arg200 and Arg211 each coordinate AMP. Gln239 serves as a coordination point for ATP.

It belongs to the adenylate kinase family. AK2 subfamily. As to quaternary structure, monomer.

It localises to the cytoplasm. It is found in the cytosol. The protein localises to the mitochondrion intermembrane space. The catalysed reaction is AMP + ATP = 2 ADP. Its function is as follows. Catalyzes the reversible transfer of the terminal phosphate group between ATP and AMP. Plays an important role in cellular energy homeostasis and in adenine nucleotide metabolism. Adenylate kinase activity is critical for regulation of the phosphate utilization and the AMP de novo biosynthesis pathways. This chain is Adenylate kinase, found in Coprinopsis cinerea (strain Okayama-7 / 130 / ATCC MYA-4618 / FGSC 9003) (Inky cap fungus).